We begin with the raw amino-acid sequence, 435 residues long: Citrate synthase (435 aa).

Residues His311 and Asp370 contribute to the active site.

It belongs to the citrate synthase family. In terms of assembly, homohexamer.

The enzyme catalyses oxaloacetate + acetyl-CoA + H2O = citrate + CoA + H(+). The protein operates within carbohydrate metabolism; tricarboxylic acid cycle; isocitrate from oxaloacetate: step 1/2. In Rickettsia africae (strain ESF-5), this protein is Citrate synthase (gltA).